The chain runs to 359 residues: MIAAQAKLVYHLNKYYNEKCQSRKAAISKTIREVCKVVSDVLKEVEVQEPRFISSLNEMDNRFEGLEVISPTEFEVVLYLNQMGVFNFVDDGSLPGCAVLKLSDGRKRSMSLWVEFITASGYLSARKIRSRFQTLVAQAVDKCSYRDVVKMVADTSEVKLRIRDRYVVQITPAFKCTGIWPRSAAHWPLPHIPWPGPNRVAEVKAEGFNLLSKECYSLNGKQSSAESDAWVLQFAEAENRLLLGGCRKKCLSLLKTLRDRHLELPGQPLNNYHMKTLVSYECEKHPRESDWDENCLGDRLNGILLQLISCLQCRRCPHYFLPNLDLFQGKPHSALENAAKQTWRLAREILTNPKSLEKL.

Residues 23–24 (RK) and 63–66 (FEGL) contribute to the a ribonucleoside 5'-triphosphate site. Positions 73 and 75 each coordinate Mg(2+). A ribonucleoside 5'-triphosphate is bound by residues Lys248 and 252–255 (SLLK).

This sequence belongs to the mab-21 family. In terms of assembly, monomer. Homodecamer; composed of 2 back to back homopentamers. The protein may exist as monomer in solution and oiligomerizes upon ligand binding.

The protein resides in the nucleus. Its function is as follows. Putative nucleotidyltransferase required for several aspects of embryonic development including normal development of the eye. It is unclear whether it displays nucleotidyltransferase activity in vivo. Binds single-stranded RNA (ssRNA). The polypeptide is Putative nucleotidyltransferase MAB21L1 (mab21l1) (Danio rerio (Zebrafish)).